The chain runs to 289 residues: Homoserine kinase (289 aa).

79 to 89 (PLARGLGSSSS) contributes to the ATP binding site.

It belongs to the GHMP kinase family. Homoserine kinase subfamily.

The protein resides in the cytoplasm. The catalysed reaction is L-homoserine + ATP = O-phospho-L-homoserine + ADP + H(+). Its pathway is amino-acid biosynthesis; L-threonine biosynthesis; L-threonine from L-aspartate: step 4/5. Catalyzes the ATP-dependent phosphorylation of L-homoserine to L-homoserine phosphate. This is Homoserine kinase from Streptococcus pneumoniae serotype 2 (strain D39 / NCTC 7466).